Here is a 427-residue protein sequence, read N- to C-terminus: 3-phosphoshikimate 1-carboxyvinyltransferase (427 aa).

3-phosphoshikimate contacts are provided by K20, S21, and R25. K20 is a phosphoenolpyruvate binding site. The phosphoenolpyruvate site is built by G92 and R120. 3-phosphoshikimate contacts are provided by S166, Q168, D312, and K339. Position 168 (Q168) interacts with phosphoenolpyruvate. D312 acts as the Proton acceptor in catalysis. Positions 343 and 385 each coordinate phosphoenolpyruvate.

This sequence belongs to the EPSP synthase family. In terms of assembly, monomer.

It is found in the cytoplasm. The enzyme catalyses 3-phosphoshikimate + phosphoenolpyruvate = 5-O-(1-carboxyvinyl)-3-phosphoshikimate + phosphate. It functions in the pathway metabolic intermediate biosynthesis; chorismate biosynthesis; chorismate from D-erythrose 4-phosphate and phosphoenolpyruvate: step 6/7. Catalyzes the transfer of the enolpyruvyl moiety of phosphoenolpyruvate (PEP) to the 5-hydroxyl of shikimate-3-phosphate (S3P) to produce enolpyruvyl shikimate-3-phosphate and inorganic phosphate. This Streptococcus pneumoniae (strain 70585) protein is 3-phosphoshikimate 1-carboxyvinyltransferase.